The sequence spans 150 residues: Large ribosomal subunit protein bL9 (150 aa).

Belongs to the bacterial ribosomal protein bL9 family.

Binds to the 23S rRNA. This Clavibacter sepedonicus (Clavibacter michiganensis subsp. sepedonicus) protein is Large ribosomal subunit protein bL9.